The sequence spans 93 residues: Large ribosomal subunit protein uL23cz/uL23cy (93 aa).

Belongs to the universal ribosomal protein uL23 family. As to quaternary structure, part of the 50S ribosomal subunit.

Its subcellular location is the plastid. It localises to the chloroplast. Its function is as follows. Binds to 23S rRNA. This is Large ribosomal subunit protein uL23cz/uL23cy (rpl23-A) from Populus alba (White poplar).